The following is a 156-amino-acid chain: ATP synthase subunit b (156 aa).

A helical membrane pass occupies residues 11-31 (AIAFVLFVLFCMKYVWPPLMA).

The protein belongs to the ATPase B chain family. In terms of assembly, F-type ATPases have 2 components, F(1) - the catalytic core - and F(0) - the membrane proton channel. F(1) has five subunits: alpha(3), beta(3), gamma(1), delta(1), epsilon(1). F(0) has three main subunits: a(1), b(2) and c(10-14). The alpha and beta chains form an alternating ring which encloses part of the gamma chain. F(1) is attached to F(0) by a central stalk formed by the gamma and epsilon chains, while a peripheral stalk is formed by the delta and b chains.

It is found in the cell inner membrane. F(1)F(0) ATP synthase produces ATP from ADP in the presence of a proton or sodium gradient. F-type ATPases consist of two structural domains, F(1) containing the extramembraneous catalytic core and F(0) containing the membrane proton channel, linked together by a central stalk and a peripheral stalk. During catalysis, ATP synthesis in the catalytic domain of F(1) is coupled via a rotary mechanism of the central stalk subunits to proton translocation. Functionally, component of the F(0) channel, it forms part of the peripheral stalk, linking F(1) to F(0). The protein is ATP synthase subunit b of Shigella boydii serotype 18 (strain CDC 3083-94 / BS512).